A 335-amino-acid chain; its full sequence is Nod factor export ATP-binding protein I (335 aa).

Residues 1 to 10 (MTQEVPRRLE) show a composition bias toward basic and acidic residues. The interval 1–22 (MTQEVPRRLEPSPFEWKGDAGP) is disordered. An ABC transporter domain is found at 37-267 (IDLASVTKSY…KIGCQVIEIY (231 aa)). 69–76 (GPNGAGKS) contacts ATP.

Belongs to the ABC transporter superfamily. Lipooligosaccharide exporter (TC 3.A.1.102) family. As to quaternary structure, the complex is composed of two ATP-binding proteins (NodI) and two transmembrane proteins (NodJ).

It localises to the cell inner membrane. In terms of biological role, part of the ABC transporter complex NodIJ involved in the export of the nodulation factors (Nod factors), the bacterial signal molecules that induce symbiosis and subsequent nodulation induction. Nod factors are LCO (lipo-chitin oligosaccharide), a modified beta-1,4-linked N-acetylglucosamine oligosaccharide. This subunit is responsible for energy coupling to the transport system. The polypeptide is Nod factor export ATP-binding protein I (Rhizobium meliloti (Ensifer meliloti)).